The following is a 482-amino-acid chain: tRNA sulfurtransferase (482 aa).

One can recognise a THUMP domain in the interval Ser61 to Arg165. ATP-binding positions include Leu183 to Ile184, Lys265, Gly287, and Gln296. Cysteines 344 and 456 form a disulfide. In terms of domain architecture, Rhodanese spans Phe404–Pro482. Cys456 acts as the Cysteine persulfide intermediate in catalysis.

It belongs to the ThiI family.

It localises to the cytoplasm. The catalysed reaction is [ThiI sulfur-carrier protein]-S-sulfanyl-L-cysteine + a uridine in tRNA + 2 reduced [2Fe-2S]-[ferredoxin] + ATP + H(+) = [ThiI sulfur-carrier protein]-L-cysteine + a 4-thiouridine in tRNA + 2 oxidized [2Fe-2S]-[ferredoxin] + AMP + diphosphate. It carries out the reaction [ThiS sulfur-carrier protein]-C-terminal Gly-Gly-AMP + S-sulfanyl-L-cysteinyl-[cysteine desulfurase] + AH2 = [ThiS sulfur-carrier protein]-C-terminal-Gly-aminoethanethioate + L-cysteinyl-[cysteine desulfurase] + A + AMP + 2 H(+). It participates in cofactor biosynthesis; thiamine diphosphate biosynthesis. Functionally, catalyzes the ATP-dependent transfer of a sulfur to tRNA to produce 4-thiouridine in position 8 of tRNAs, which functions as a near-UV photosensor. Also catalyzes the transfer of sulfur to the sulfur carrier protein ThiS, forming ThiS-thiocarboxylate. This is a step in the synthesis of thiazole, in the thiamine biosynthesis pathway. The sulfur is donated as persulfide by IscS. This is tRNA sulfurtransferase from Pectobacterium carotovorum subsp. carotovorum (strain PC1).